Reading from the N-terminus, the 514-residue chain is Maturase K (514 aa).

This sequence belongs to the intron maturase 2 family. MatK subfamily.

The protein localises to the plastid. The protein resides in the chloroplast. Usually encoded in the trnK tRNA gene intron. Probably assists in splicing its own and other chloroplast group II introns. This Lepidozamia peroffskyana (Peroffsky's lepidozamia) protein is Maturase K.